Reading from the N-terminus, the 447-residue chain is Argininosuccinate synthase (447 aa).

ATP-binding positions include 20-28 (AFSGGLDTS) and Ala46. Position 102 (Tyr102) interacts with L-citrulline. 2 residues coordinate ATP: Gly132 and Thr134. L-aspartate is bound by residues Thr134, Asn138, and Asp139. Asn138 lines the L-citrulline pocket. Residue Asp139 participates in ATP binding. L-citrulline-binding residues include Arg142 and Ser195. Asp197 provides a ligand contact to ATP. Residues Thr204, Glu206, and Glu283 each contribute to the L-citrulline site.

This sequence belongs to the argininosuccinate synthase family. Type 2 subfamily. Homotetramer.

It localises to the cytoplasm. It carries out the reaction L-citrulline + L-aspartate + ATP = 2-(N(omega)-L-arginino)succinate + AMP + diphosphate + H(+). Its pathway is amino-acid biosynthesis; L-arginine biosynthesis; L-arginine from L-ornithine and carbamoyl phosphate: step 2/3. This Neisseria meningitidis serogroup C (strain 053442) protein is Argininosuccinate synthase.